Reading from the N-terminus, the 176-residue chain is Isopentenyl-diphosphate Delta-isomerase (176 aa).

Positions 24 and 30 each coordinate Mn(2+). Residues 28-160 enclose the Nudix hydrolase domain; that stretch reads LLHRAFSIFV…PSAFTVWFHC (133 aa). C65 is a catalytic residue. Mn(2+) is bound at residue H67. Mg(2+) is bound at residue E85. E110 and E112 together coordinate Mn(2+). The active site involves E112.

It belongs to the IPP isomerase type 1 family. Requires Mg(2+) as cofactor. Mn(2+) serves as cofactor.

It localises to the cytoplasm. The catalysed reaction is isopentenyl diphosphate = dimethylallyl diphosphate. It participates in isoprenoid biosynthesis; dimethylallyl diphosphate biosynthesis; dimethylallyl diphosphate from isopentenyl diphosphate: step 1/1. Its function is as follows. Catalyzes the 1,3-allylic rearrangement of the homoallylic substrate isopentenyl (IPP) to its highly electrophilic allylic isomer, dimethylallyl diphosphate (DMAPP). The protein is Isopentenyl-diphosphate Delta-isomerase of Burkholderia multivorans (strain ATCC 17616 / 249).